The following is a 1382-amino-acid chain: DNA-directed RNA polymerase subunit beta (1382 aa).

This sequence belongs to the RNA polymerase beta chain family. As to quaternary structure, the RNAP catalytic core consists of 2 alpha, 1 beta, 1 beta' and 1 omega subunit. When a sigma factor is associated with the core the holoenzyme is formed, which can initiate transcription.

It catalyses the reaction RNA(n) + a ribonucleoside 5'-triphosphate = RNA(n+1) + diphosphate. DNA-dependent RNA polymerase catalyzes the transcription of DNA into RNA using the four ribonucleoside triphosphates as substrates. The protein is DNA-directed RNA polymerase subunit beta of Aliarcobacter butzleri (strain RM4018) (Arcobacter butzleri).